A 424-amino-acid polypeptide reads, in one-letter code: Spore coat protein SP60 (424 aa).

An N-terminal signal peptide occupies residues 1-23 (MKILSLLVVGALCMGGKVYGEVN). 6 consecutive Follistatin-like domains span residues 52 to 74 (DCSTLQCPPRYHCEVNNGNRQCV), 85 to 109 (KCDNVHCPKGFNCKYDWEKDLALCV), 117 to 139 (VCRTRCPEGHECKVDEWGKECCV), 184 to 206 (ICRLRCPPGHECKHDEHGKECCV), 215 to 234 (DLKCKRGYECKIKHDGSKCC), and 299 to 322 (RCDDVECPDFHRCVERRGGILSCE). The disordered stretch occupies residues 330 to 424 (RSLDWAENEN…FQDANDEWDY (95 aa)). Composition is skewed to acidic residues over residues 335–357 (AENENDDRDYDDRDYDDDEYDGD) and 365–424 (YDGD…EWDY).

The polypeptide is Spore coat protein SP60 (cotC) (Dictyostelium discoideum (Social amoeba)).